A 608-amino-acid chain; its full sequence is MGSDTLAAPPHGAPRVDRDVVSRFATCCRALGLTVNDRQRPADLTAARAGFAGLTHLAHDQCDAWIGLAAAGEVTPAVVDAVWRTVASAGVLQREIGLAAGELGFTYDTGWYLQFRATEPDDFQLAYAARLYEAGEFGEADGLVGEILARRPGWFDARWLQVAINHRAQRWSDVVRLLTPVVTLPSLDDVTSHAVRTALGISLARLGMFAPAMSYLEDPAGPIEVAAVDGALAKALTLRAQGEDDEATEVLQDLFATHPENTQVEQALLDTSFGLVTTTSARIEARSDPWDPETEPSEAEFVDPGAKDRKAHLLLEAEAELAEFIGLEEVKFQVARLKSSVAMAIRRQERGLAVAQRTNHLVFAGPPGTGKTTIARVVAKIYCGLGLLKKETVREVHRADLIGQHIGETEAKTNAIIDSALDGVLFLDEAYALVSTGAKNDFGLVAIDTLLARMENDRDRLVVIVAGYRKDLDAFLDTNEGLRSRFTRSIDFPSYTAPELVEIAVRMAEKRDSVFEKAAHDDMERLFTHLAQATTPDANGVERRSLDIAGNARFVRNLVERSEEEREYRLDHSDQEDFTDEEMMTITAGDVQRSAAPLLRGLGLSVPA.

The interval 284-303 is disordered; it reads EARSDPWDPETEPSEAEFVD. The span at 290–301 shows a compositional bias: acidic residues; sequence WDPETEPSEAEF. 365–372 contacts ATP; sequence GPPGTGKT.

Belongs to the CbxX/CfxQ family. Part of the ESX-3 / type VII secretion system (T7SS), which is composed of cytosolic and membrane components.

The protein localises to the cytoplasm. In terms of biological role, part of the ESX-3 specialized secretion system, which is required for siderophore-mediated iron acquisition and for the secretion of EsxH and EsxG. EccA3 exhibits ATPase activity and may provide energy for the export of ESX-3 substrates. In Mycolicibacterium smegmatis (strain ATCC 700084 / mc(2)155) (Mycobacterium smegmatis), this protein is ESX-3 secretion system protein EccA3.